A 49-amino-acid polypeptide reads, in one-letter code: Omega-segestritoxin-Sf1a (49 aa).

Intrachain disulfides connect C3–C22, C10–C27, C21–C48, and C29–C46.

Expressed by the venom gland.

The protein localises to the secreted. Functionally, potent and selective blocker of N-type voltage-gated calcium channels (Cav2.2/CACNA1B). Also blocks vertebrate Cav2.1/CACNA1A (P/Q-type) and Cav1.2/CACNA1C (L-type) channels at very high concentration (2 micromolar). This is Omega-segestritoxin-Sf1a from Segestria florentina (Tube-web spider).